The following is a 232-amino-acid chain: Endonuclease V (232 aa).

Mg(2+) contacts are provided by aspartate 43 and aspartate 109.

It belongs to the endonuclease V family. Mg(2+) serves as cofactor.

It is found in the cytoplasm. It carries out the reaction Endonucleolytic cleavage at apurinic or apyrimidinic sites to products with a 5'-phosphate.. Functionally, DNA repair enzyme involved in the repair of deaminated bases. Selectively cleaves double-stranded DNA at the second phosphodiester bond 3' to a deoxyinosine leaving behind the intact lesion on the nicked DNA. The sequence is that of Endonuclease V from Thermofilum pendens (strain DSM 2475 / Hrk 5).